Consider the following 618-residue polypeptide: Dihydroxy-acid dehydratase (618 aa).

Aspartate 81 is a Mg(2+) binding site. Residue cysteine 122 participates in [2Fe-2S] cluster binding. Mg(2+) contacts are provided by aspartate 123 and lysine 124. At lysine 124 the chain carries N6-carboxylysine. Cysteine 195 lines the [2Fe-2S] cluster pocket. Glutamate 492 lines the Mg(2+) pocket. The active-site Proton acceptor is serine 518.

This sequence belongs to the IlvD/Edd family. Homodimer. It depends on [2Fe-2S] cluster as a cofactor. The cofactor is Mg(2+).

The enzyme catalyses (2R)-2,3-dihydroxy-3-methylbutanoate = 3-methyl-2-oxobutanoate + H2O. The catalysed reaction is (2R,3R)-2,3-dihydroxy-3-methylpentanoate = (S)-3-methyl-2-oxopentanoate + H2O. The protein operates within amino-acid biosynthesis; L-isoleucine biosynthesis; L-isoleucine from 2-oxobutanoate: step 3/4. Its pathway is amino-acid biosynthesis; L-valine biosynthesis; L-valine from pyruvate: step 3/4. Functions in the biosynthesis of branched-chain amino acids. Catalyzes the dehydration of (2R,3R)-2,3-dihydroxy-3-methylpentanoate (2,3-dihydroxy-3-methylvalerate) into 2-oxo-3-methylpentanoate (2-oxo-3-methylvalerate) and of (2R)-2,3-dihydroxy-3-methylbutanoate (2,3-dihydroxyisovalerate) into 2-oxo-3-methylbutanoate (2-oxoisovalerate), the penultimate precursor to L-isoleucine and L-valine, respectively. This chain is Dihydroxy-acid dehydratase, found in Zymomonas mobilis subsp. mobilis (strain ATCC 31821 / ZM4 / CP4).